The sequence spans 377 residues: Glutamate 5-kinase (377 aa).

K20 lines the ATP pocket. 3 residues coordinate substrate: S60, D147, and N159. 179–180 (TD) lines the ATP pocket. One can recognise a PUA domain in the interval 285-363 (AGRLVIDDGA…DKVYQVLGEA (79 aa)).

It belongs to the glutamate 5-kinase family.

The protein resides in the cytoplasm. The enzyme catalyses L-glutamate + ATP = L-glutamyl 5-phosphate + ADP. It participates in amino-acid biosynthesis; L-proline biosynthesis; L-glutamate 5-semialdehyde from L-glutamate: step 1/2. Its function is as follows. Catalyzes the transfer of a phosphate group to glutamate to form L-glutamate 5-phosphate. This Acinetobacter baumannii (strain SDF) protein is Glutamate 5-kinase.